The sequence spans 594 residues: DNA ligase (594 aa).

E256 serves as a coordination point for ATP. K258 serves as the catalytic N6-AMP-lysine intermediate. R263, R279, E309, F349, R426, and K432 together coordinate ATP.

Belongs to the ATP-dependent DNA ligase family. Mg(2+) is required as a cofactor.

The enzyme catalyses ATP + (deoxyribonucleotide)n-3'-hydroxyl + 5'-phospho-(deoxyribonucleotide)m = (deoxyribonucleotide)n+m + AMP + diphosphate.. Functionally, DNA ligase that seals nicks in double-stranded DNA during DNA replication, DNA recombination and DNA repair. The sequence is that of DNA ligase from Ignicoccus hospitalis (strain KIN4/I / DSM 18386 / JCM 14125).